The primary structure comprises 311 residues: Aspartate carbamoyltransferase catalytic subunit (311 aa).

Residues arginine 55 and threonine 56 each contribute to the carbamoyl phosphate site. Position 84 (lysine 84) interacts with L-aspartate. Arginine 105, histidine 133, and glutamine 136 together coordinate carbamoyl phosphate. Positions 166 and 229 each coordinate L-aspartate. Carbamoyl phosphate contacts are provided by leucine 268 and proline 269.

It belongs to the aspartate/ornithine carbamoyltransferase superfamily. ATCase family. As to quaternary structure, heterododecamer (2C3:3R2) of six catalytic PyrB chains organized as two trimers (C3), and six regulatory PyrI chains organized as three dimers (R2).

The enzyme catalyses carbamoyl phosphate + L-aspartate = N-carbamoyl-L-aspartate + phosphate + H(+). It functions in the pathway pyrimidine metabolism; UMP biosynthesis via de novo pathway; (S)-dihydroorotate from bicarbonate: step 2/3. In terms of biological role, catalyzes the condensation of carbamoyl phosphate and aspartate to form carbamoyl aspartate and inorganic phosphate, the committed step in the de novo pyrimidine nucleotide biosynthesis pathway. The sequence is that of Aspartate carbamoyltransferase catalytic subunit from Alkaliphilus metalliredigens (strain QYMF).